The sequence spans 714 residues: Inducible lysine decarboxylase (714 aa).

Lys367 carries the post-translational modification N6-(pyridoxal phosphate)lysine.

This sequence belongs to the Orn/Lys/Arg decarboxylase class-I family. Homodecamer. Interacts with RavA. It depends on pyridoxal 5'-phosphate as a cofactor.

Its subcellular location is the cytoplasm. It catalyses the reaction L-lysine + H(+) = cadaverine + CO2. This chain is Inducible lysine decarboxylase (cadA), found in Salmonella typhi.